A 37-amino-acid polypeptide reads, in one-letter code: NADH dehydrogenase [ubiquinone] 1 alpha subcomplex subunit 5 (37 aa).

Belongs to the complex I NDUFA5 subunit family. Complex I is composed of about 45 different subunits.

The protein localises to the mitochondrion inner membrane. Accessory subunit of the mitochondrial membrane respiratory chain NADH dehydrogenase (Complex I), that is believed not to be involved in catalysis. Complex I functions in the transfer of electrons from NADH to the respiratory chain. The immediate electron acceptor for the enzyme is believed to be ubiquinone. The sequence is that of NADH dehydrogenase [ubiquinone] 1 alpha subcomplex subunit 5 from Solanum tuberosum (Potato).